We begin with the raw amino-acid sequence, 296 residues long: AUGMIN subunit 2 (296 aa).

2 coiled-coil regions span residues 56–83 (DDLI…QGRK) and 253–285 (AVHK…NRRL). The segment at 218–296 (AVSLPTTPGG…WPPSVKKSSV (79 aa)) is disordered. The segment covering 264 to 277 (QNEEEEEEEEEEDG) has biased composition (acidic residues).

Belongs to the HAUS2 family. In terms of assembly, part of the augmin complex composed of 8 subunits. The complex acts on microtubules and interacts with gamma-tubulin in spindles and the phragmoplast.

Its function is as follows. Contributes to the assembly of the acentrosomal spindle and phragmoplast microtubule arrays as part of the augmin complex. This Arabidopsis thaliana (Mouse-ear cress) protein is AUGMIN subunit 2.